The chain runs to 185 residues: Peptidyl-tRNA hydrolase (185 aa).

TRNA is bound at residue Tyr-14. Catalysis depends on His-19, which acts as the Proton acceptor. TRNA contacts are provided by Tyr-65, Asn-67, and Asn-113.

It belongs to the PTH family. As to quaternary structure, monomer.

The protein resides in the cytoplasm. It carries out the reaction an N-acyl-L-alpha-aminoacyl-tRNA + H2O = an N-acyl-L-amino acid + a tRNA + H(+). Its function is as follows. Hydrolyzes ribosome-free peptidyl-tRNAs (with 1 or more amino acids incorporated), which drop off the ribosome during protein synthesis, or as a result of ribosome stalling. In terms of biological role, catalyzes the release of premature peptidyl moieties from peptidyl-tRNA molecules trapped in stalled 50S ribosomal subunits, and thus maintains levels of free tRNAs and 50S ribosomes. The polypeptide is Peptidyl-tRNA hydrolase (Rickettsia typhi (strain ATCC VR-144 / Wilmington)).